Here is a 184-residue protein sequence, read N- to C-terminus: Large ribosomal subunit protein uL5 (184 aa).

It belongs to the universal ribosomal protein uL5 family. Part of the 50S ribosomal subunit; part of the 5S rRNA/L5/L18/L25 subcomplex. Contacts the 5S rRNA and the P site tRNA. Forms a bridge to the 30S subunit in the 70S ribosome.

In terms of biological role, this is one of the proteins that bind and probably mediate the attachment of the 5S RNA into the large ribosomal subunit, where it forms part of the central protuberance. In the 70S ribosome it contacts protein S13 of the 30S subunit (bridge B1b), connecting the 2 subunits; this bridge is implicated in subunit movement. Contacts the P site tRNA; the 5S rRNA and some of its associated proteins might help stabilize positioning of ribosome-bound tRNAs. The polypeptide is Large ribosomal subunit protein uL5 (Pelagibacter ubique (strain HTCC1062)).